The sequence spans 122 residues: Large ribosomal subunit protein uL14 (122 aa).

This sequence belongs to the universal ribosomal protein uL14 family. In terms of assembly, part of the 50S ribosomal subunit. Forms a cluster with proteins L3 and L19. In the 70S ribosome, L14 and L19 interact and together make contacts with the 16S rRNA in bridges B5 and B8.

In terms of biological role, binds to 23S rRNA. Forms part of two intersubunit bridges in the 70S ribosome. The chain is Large ribosomal subunit protein uL14 from Staphylococcus carnosus (strain TM300).